The primary structure comprises 214 residues: tRNA (guanine-N(7)-)-methyltransferase (214 aa).

S-adenosyl-L-methionine contacts are provided by E44, E69, D96, and D118. Residue D118 is part of the active site. K122 is a substrate binding site. The segment at R124–R129 is interaction with RNA. Substrate-binding positions include D154 and T192–E195.

It belongs to the class I-like SAM-binding methyltransferase superfamily. TrmB family.

It catalyses the reaction guanosine(46) in tRNA + S-adenosyl-L-methionine = N(7)-methylguanosine(46) in tRNA + S-adenosyl-L-homocysteine. Its pathway is tRNA modification; N(7)-methylguanine-tRNA biosynthesis. Its function is as follows. Catalyzes the formation of N(7)-methylguanine at position 46 (m7G46) in tRNA. This chain is tRNA (guanine-N(7)-)-methyltransferase, found in Lactiplantibacillus plantarum (strain ATCC BAA-793 / NCIMB 8826 / WCFS1) (Lactobacillus plantarum).